An 885-amino-acid chain; its full sequence is Lon protease homolog 2, peroxisomal (885 aa).

One can recognise a Lon N-terminal domain in the interval 12 to 256; sequence LAVLPFRNKV…KATELVDRHL (245 aa). Residues 70–104 form a disordered region; that stretch reads LLSPGVGSDSGEGGSKVGGSAVESSKQDTKNGKEP. The span at 77–86 shows a compositional bias: gly residues; sequence SDSGEGGSKV. Over residues 94–104 the composition is skewed to basic and acidic residues; the sequence is SKQDTKNGKEP. 409-416 serves as a coordination point for ATP; that stretch reads GPPGVGKT. In terms of domain architecture, Lon proteolytic spans 690-875; it reads VASPGVSVGL…EEVLDHAFEG (186 aa). Residues S781 and K824 contribute to the active site. The Microbody targeting signal motif lies at 883–885; the sequence is SKL.

Belongs to the peptidase S16 family.

It is found in the peroxisome matrix. It catalyses the reaction Hydrolysis of proteins in presence of ATP.. ATP-dependent serine protease that mediates the selective degradation of misfolded and unassembled polypeptides in the peroxisomal matrix. Necessary for type 2 peroxisome targeting signal (PTS2)-containing protein processing and facilitates peroxisome matrix protein import. In Zea mays (Maize), this protein is Lon protease homolog 2, peroxisomal (LON1).